A 459-amino-acid chain; its full sequence is Vanillin aminotransferase (459 aa).

Pyridoxal 5'-phosphate is bound by residues 115–116 (GS) and D255. K284 is subject to N6-(pyridoxal phosphate)lysine. 320-321 (FT) serves as a coordination point for pyridoxal 5'-phosphate. Positions 430–457 (LEELDELIRIYGKALKDTEKRVEELKSQ) form a coiled coil.

This sequence belongs to the class-III pyridoxal-phosphate-dependent aminotransferase family. Confined to the placenta of green fruits at high levels. Barely detectable in the pericarp and seeds as well as in the placenta of mature fruits.

The catalysed reaction is vanillin + L-alanine = vanillylamine + pyruvate. The protein operates within aromatic compound metabolism; phenylpropanoid biosynthesis. Involved in the biosynthesis of capsaicinoids natural products, pungent alkaloids synthesized from phenylpropanoid intermediates in the placental tissue of chili pepper fruit acting as repellant on herbivorous mammals and conferring spiciness to hot peppers. Can transfer an amine from vanillylamine to pyruvate forming vanillin and L-alanine. In Capsicum annuum (Capsicum pepper), this protein is Vanillin aminotransferase.